Consider the following 460-residue polypeptide: Carboxypeptidase DacB (460 aa).

Residues 1–28 form the signal peptide; it reads MRPTRWRRSTHVAVGVAVLALVVAVVAA. A disordered region spans residues 39-64; the sequence is AAEAVPPAPPPATADPGVVPVDLSAP. S113 functions as the Acyl-ester intermediate in the catalytic mechanism. K116 functions as the Proton acceptor in the catalytic mechanism. Residue S294 is part of the active site.

It belongs to the peptidase S13 family.

Its function is as follows. Carboxypeptidase that cleaves terminal D-alanine from peptidoglycan in the mycobacterial cell wall. May cleave L-Lys-D-Ala and/or D-Ala-D-Ala peptide bonds. Exerts important effects on mycobacterial cell morphology and cell division. This chain is Carboxypeptidase DacB, found in Mycolicibacterium smegmatis (strain ATCC 700084 / mc(2)155) (Mycobacterium smegmatis).